The following is a 188-amino-acid chain: MWLIVGLGNPGERYARTRHNIGFRSVDTLAERHGLTFRPQRANSQLAEGNIYGQRVVLAKPQTYMNLSGQAVVALCNWYKIDPARELLVIYDDLDLPFAKLRIRERGSAGTHNGMRSIVAQLGTTEFPRLRVGIGQPPGKMDAADYVLGRFTPDEEAALPDLLGRIADAVEVILREGLTTAMNRYNPL.

Tyrosine 14 contacts tRNA. Catalysis depends on histidine 19, which acts as the Proton acceptor. Residues tyrosine 64, asparagine 66, and asparagine 113 each coordinate tRNA.

It belongs to the PTH family. Monomer.

It is found in the cytoplasm. The enzyme catalyses an N-acyl-L-alpha-aminoacyl-tRNA + H2O = an N-acyl-L-amino acid + a tRNA + H(+). In terms of biological role, hydrolyzes ribosome-free peptidyl-tRNAs (with 1 or more amino acids incorporated), which drop off the ribosome during protein synthesis, or as a result of ribosome stalling. Functionally, catalyzes the release of premature peptidyl moieties from peptidyl-tRNA molecules trapped in stalled 50S ribosomal subunits, and thus maintains levels of free tRNAs and 50S ribosomes. In Chloroflexus aurantiacus (strain ATCC 29364 / DSM 637 / Y-400-fl), this protein is Peptidyl-tRNA hydrolase.